Consider the following 363-residue polypeptide: 3-isopropylmalate dehydrogenase (363 aa).

An NAD(+)-binding site is contributed by 79–92 (GPKWEHLPPNDQPE). Arg100, Arg110, Arg139, and Asp228 together coordinate substrate. Mg(2+) contacts are provided by Asp228, Asp252, and Asp256. Position 286–298 (286–298 (GSAPDIAGKNIAN)) interacts with NAD(+).

The protein belongs to the isocitrate and isopropylmalate dehydrogenases family. LeuB type 1 subfamily. Homodimer. Requires Mg(2+) as cofactor. Mn(2+) is required as a cofactor.

Its subcellular location is the cytoplasm. It carries out the reaction (2R,3S)-3-isopropylmalate + NAD(+) = 4-methyl-2-oxopentanoate + CO2 + NADH. It functions in the pathway amino-acid biosynthesis; L-leucine biosynthesis; L-leucine from 3-methyl-2-oxobutanoate: step 3/4. Functionally, catalyzes the oxidation of 3-carboxy-2-hydroxy-4-methylpentanoate (3-isopropylmalate) to 3-carboxy-4-methyl-2-oxopentanoate. The product decarboxylates to 4-methyl-2 oxopentanoate. This chain is 3-isopropylmalate dehydrogenase, found in Vibrio parahaemolyticus serotype O3:K6 (strain RIMD 2210633).